The following is a 167-amino-acid chain: Photosystem I assembly protein Ycf3 (167 aa).

TPR repeat units lie at residues 35-68 (AFTY…EVDA), 72-105 (SYIF…NPSL), and 120-153 (GEQA…APTN).

It belongs to the Ycf3 family.

Its subcellular location is the plastid. The protein resides in the chloroplast thylakoid membrane. Its function is as follows. Essential for the assembly of the photosystem I (PSI) complex. May act as a chaperone-like factor to guide the assembly of the PSI subunits. This Pleurastrum terricola (Filamentous green alga) protein is Photosystem I assembly protein Ycf3.